Here is a 106-residue protein sequence, read N- to C-terminus: Large ribosomal subunit protein uL24 (106 aa).

This sequence belongs to the universal ribosomal protein uL24 family. Part of the 50S ribosomal subunit.

One of two assembly initiator proteins, it binds directly to the 5'-end of the 23S rRNA, where it nucleates assembly of the 50S subunit. Its function is as follows. One of the proteins that surrounds the polypeptide exit tunnel on the outside of the subunit. This Paramagnetospirillum magneticum (strain ATCC 700264 / AMB-1) (Magnetospirillum magneticum) protein is Large ribosomal subunit protein uL24.